The primary structure comprises 971 residues: Mating-type switching protein swi1 (971 aa).

Phosphoserine occurs at positions 528, 536, and 970.

As to quaternary structure, fork protection complex (FPC) consisting of swi1 and swi3 interacts with mat1 cis-acting sequences and mat1-proximal polar-terminator of replication (RTS1).

The protein resides in the nucleus. Its function is as follows. Forms a fork protection complex (FPC) with swi3. FPC coordinates leading and lagging strand synthesis and moves with the replication fork. It is required for programmed fork-pausing which is necessary for mating-type switching. FPC stabilizes replication forks in a configuration that is recognized by replication checkpoint sensors. It is involved in termination at the mat1-proximal polar-terminator of replication (RTS1) and also required for activation of the Rad53-like checkpoint kinase cds1. This is Mating-type switching protein swi1 (swi1) from Schizosaccharomyces pombe (strain 972 / ATCC 24843) (Fission yeast).